The following is a 236-amino-acid chain: 7-cyano-7-deazaguanine synthase (236 aa).

7 to 17 lines the ATP pocket; sequence CSGGLDSVSLA. Residues cysteine 185, cysteine 193, cysteine 196, and cysteine 199 each coordinate Zn(2+).

Belongs to the QueC family. Requires Zn(2+) as cofactor.

It carries out the reaction 7-carboxy-7-deazaguanine + NH4(+) + ATP = 7-cyano-7-deazaguanine + ADP + phosphate + H2O + H(+). The protein operates within purine metabolism; 7-cyano-7-deazaguanine biosynthesis. Catalyzes the ATP-dependent conversion of 7-carboxy-7-deazaguanine (CDG) to 7-cyano-7-deazaguanine (preQ(0)). This chain is 7-cyano-7-deazaguanine synthase, found in Rhizobium rhizogenes (strain K84 / ATCC BAA-868) (Agrobacterium radiobacter).